The following is a 313-amino-acid chain: uncharacterized protein (313 aa).

3 helical membrane-spanning segments follow: residues 41–61 (LAGTMILSVLSSPALVSGLMV), 68–88 (VHSVLFPIPIFFSINQLFHYF), and 102–122 (QLLLFLISHFLLLLVLTKLVL).

The protein belongs to the cytochrome b family.

Its subcellular location is the mitochondrion membrane. This is an uncharacterized protein from Arabidopsis thaliana (Mouse-ear cress).